A 92-amino-acid polypeptide reads, in one-letter code: UPF0250 protein XAC0666 (92 aa).

Belongs to the UPF0250 family.

This Xanthomonas axonopodis pv. citri (strain 306) protein is UPF0250 protein XAC0666.